A 428-amino-acid polypeptide reads, in one-letter code: Adenylosuccinate synthetase (428 aa).

GTP is bound by residues 12 to 18 and 40 to 42; these read GDEGKGK and GHT. The Proton acceptor role is filled by aspartate 13. Residues aspartate 13 and glycine 40 each coordinate Mg(2+). IMP contacts are provided by residues 13–16, 38–41, threonine 128, arginine 142, glutamine 223, threonine 238, and arginine 302; these read DEGK and NAGH. The active-site Proton donor is the histidine 41. 298-304 lines the substrate pocket; the sequence is TTTGRPR. Residues arginine 304, 330 to 332, and 412 to 414 contribute to the GTP site; these read KLD and SVG.

Belongs to the adenylosuccinate synthetase family. In terms of assembly, homodimer. It depends on Mg(2+) as a cofactor.

Its subcellular location is the cytoplasm. The catalysed reaction is IMP + L-aspartate + GTP = N(6)-(1,2-dicarboxyethyl)-AMP + GDP + phosphate + 2 H(+). It participates in purine metabolism; AMP biosynthesis via de novo pathway; AMP from IMP: step 1/2. Its function is as follows. Plays an important role in the de novo pathway of purine nucleotide biosynthesis. Catalyzes the first committed step in the biosynthesis of AMP from IMP. The chain is Adenylosuccinate synthetase from Brevibacillus brevis (strain 47 / JCM 6285 / NBRC 100599).